Reading from the N-terminus, the 265-residue chain is Hemin import ATP-binding protein HmuV (265 aa).

The 237-residue stretch at 13–249 (LKASNLHLQL…TAVENVYGWP (237 aa)) folds into the ABC transporter domain. 45–52 (GPNGAGKS) is an ATP binding site.

Belongs to the ABC transporter superfamily. Heme (hemin) importer (TC 3.A.1.14.5) family. As to quaternary structure, the complex is composed of two ATP-binding proteins (HmuV), two transmembrane proteins (HmuU) and a solute-binding protein (HmuT).

It is found in the cell inner membrane. Its function is as follows. Part of the ABC transporter complex HmuTUV involved in hemin import. Responsible for energy coupling to the transport system. The polypeptide is Hemin import ATP-binding protein HmuV (Photobacterium damselae subsp. damselae (Listonella damsela)).